A 637-amino-acid chain; its full sequence is Early transcription factor 70 kDa subunit (637 aa).

Positions 32–185 (RTIIDENRSV…GHIIDLMSEE (154 aa)) constitute a Helicase ATP-binding domain. 45–52 (HIMGSGKT) contributes to the ATP binding site. The short motif at 135 to 138 (DEAH) is the DEXH box element. In terms of domain architecture, Helicase C-terminal spans 327–507 (KFKYFINRIQ…VLPFDIKKLL (181 aa)).

It belongs to the helicase family. VETF subfamily. Heterodimer of a 70 kDa and a 82 kDa subunit. Part of the early transcription complex composed of ETF, RAP94/OPG109, and the DNA-directed RNA polymerase.

It localises to the virion. Its function is as follows. Acts with RNA polymerase to initiate transcription from early gene promoters. Is recruited by the RPO-associated protein of 94 kDa RAP94/OPG109 to form the early transcription complex, which also contains the core RNA polymerase. ETF heterodimer binds to early gene promoters. The protein is Early transcription factor 70 kDa subunit (OPG118) of Homo sapiens (Human).